The sequence spans 276 residues: Tryptophan synthase alpha chain (276 aa).

Active-site proton acceptor residues include E49 and D60.

Belongs to the TrpA family. Tetramer of two alpha and two beta chains.

It catalyses the reaction (1S,2R)-1-C-(indol-3-yl)glycerol 3-phosphate + L-serine = D-glyceraldehyde 3-phosphate + L-tryptophan + H2O. The protein operates within amino-acid biosynthesis; L-tryptophan biosynthesis; L-tryptophan from chorismate: step 5/5. Its function is as follows. The alpha subunit is responsible for the aldol cleavage of indoleglycerol phosphate to indole and glyceraldehyde 3-phosphate. The protein is Tryptophan synthase alpha chain of Corynebacterium aurimucosum (strain ATCC 700975 / DSM 44827 / CIP 107346 / CN-1) (Corynebacterium nigricans).